The chain runs to 622 residues: MSTDNKQSLPAITLAAIGVVYGDIGTSPLYTLRECLSGQFGFGVERDAVFGFLSLIFWLLIFVVSIKYLTFVMRADNAGEGGILTLMSLAGRNTSARTTSMLVIMGLIGGSFFYGEVVITPAISVMSAIEGLEIVAPQLDTWIVPLSIIVLTLLFMIQKHGTAMVGKLFAPIMLTWFLILAGLGLRSIIANPEVLHALNPMWAMHFFLEYKTVSFIALGAVVLSITGVEALYADMGHFGKFPIRLAWFTVVLPSLTLNYFGQGALLLKNPEAIKNPFFLLAPDWALIPLLIIAALATVIASQAVISGVFSLTRQAVRLGYLSPMRIIHTSEMESGQIYIPFVNWMLYVAVVIVIVSFEHSSNLAAAYGIAVTGTMVLTSILSTTVARQNWHWNKYFVALILIAFLCVDIPLFTANLDKLLSGGWLPLSLGTVMFIVMTTWKSERFRLLRRMHEHGNSLEAMIASLEKSPPVRVPGTAVYMSRAINVIPFALMHNLKHNKVLHERVILLTLRTEDAPYVHNVRRVQIEQLSPTFWRVVASYGWRETPNVEEVFHRCGLEGLSCRMMETSFFMSHESLILGKRPWYLRLRGKLYLLLQRNALRAPDQFEIPPNRVIELGTQVEI.

A run of 12 helical transmembrane segments spans residues 9–29 (LPAI…TSPL), 49–69 (VFGF…IKYL), 103–123 (VIMG…TPAI), 137–157 (PQLD…LFMI), 165–185 (VGKL…GLGL), 213–233 (VSFI…ALYA), 247–267 (WFTV…ALLL), 276–296 (PFFL…AALA), 337–357 (IYIP…IVSF), 363–383 (LAAA…ILST), 396–416 (FVAL…TANL), and 419–439 (LLSG…VMTT).

Belongs to the HAK/KUP transporter (TC 2.A.72) family.

It is found in the cell inner membrane. The enzyme catalyses K(+)(in) + H(+)(in) = K(+)(out) + H(+)(out). Functionally, responsible for the low-affinity transport of potassium into the cell. Likely operates as a K(+):H(+) symporter. The sequence is that of Low affinity potassium transport system protein Kup from Shigella sonnei (strain Ss046).